The chain runs to 194 residues: Recombination protein RecR (194 aa).

The segment at 55 to 70 (CRECGNLAEGELCPIC) adopts a C4-type zinc-finger fold. A Toprim domain is found at 78–171 (SLLAVVESVA…RVTRPAYGLP (94 aa)).

Belongs to the RecR family.

May play a role in DNA repair. It seems to be involved in an RecBC-independent recombinational process of DNA repair. It may act with RecF and RecO. This is Recombination protein RecR from Thermus thermophilus (strain ATCC 27634 / DSM 579 / HB8).